The sequence spans 366 residues: Growth hormone secretagogue receptor type 1 (366 aa).

The Extracellular segment spans residues 1 to 40 (MWNATPSEEPGFNLTLADLDWDASPGNDSLGDELLQLFPA). N-linked (GlcNAc...) asparagine glycosylation is found at Asn13 and Asn27. Residues 41–66 (PLLAGVTATCVALFVVGIAGNLLTML) traverse the membrane as a helical segment. Topologically, residues 67–72 (VVSRFR) are cytoplasmic. Residues 73–96 (ELRTTTNLYLSSMAFSDLLIFLCM) form a helical membrane-spanning segment. Residues 97–117 (PLDLVRLWQYRPWNFGDLLCK) lie on the Extracellular side of the membrane. The cysteines at positions 116 and 198 are disulfide-linked. A helical membrane pass occupies residues 118 to 139 (LFQFVSESCTYATVLTITALSV). Residues 140-162 (ERYFAICFPLRAKVVVTKGRVKL) lie on the Cytoplasmic side of the membrane. A helical membrane pass occupies residues 163 to 183 (VIFVIWAVAFCSAGPIFVLVG). Topologically, residues 184–211 (VEHENGTDPWDTNECRPTEFAVRSGLLT) are extracellular. Residues 212 to 235 (VMVWVSSIFFFLPVFCLTVLYSLI) form a helical membrane-spanning segment. Over 236-263 (GRKLWRRRRGDAVVGASLRDQNHKQTVK) the chain is Cytoplasmic. Residues 264 to 285 (MLAVVVFAFILCWLPFHVGRYL) traverse the membrane as a helical segment. Topologically, residues 286–302 (FSKSFEPGSLEIAQISQ) are extracellular. A helical transmembrane segment spans residues 303–326 (YCNLVSFVLFYLSAAINPILYNIM). Topologically, residues 327–366 (SKKYRVAVFRLLGFEPFSQRKLSTLKDESSRAWTESSINT) are cytoplasmic.

The protein belongs to the G-protein coupled receptor 1 family. In terms of tissue distribution, pituitary and hypothalamus.

It localises to the cell membrane. Its function is as follows. Receptor for ghrelin, coupled to G-alpha-11 proteins. Stimulates growth hormone secretion. Also binds other growth hormone releasing peptides (GHRP) (e.g. Met-enkephalin and GHRP-6) as well as non-peptide, low molecular weight secretagogues (e.g. L-692,429, MK-0677, adenosine). The polypeptide is Growth hormone secretagogue receptor type 1 (GHSR) (Homo sapiens (Human)).